A 190-amino-acid chain; its full sequence is Pyridoxal 5'-phosphate synthase subunit PdxT (190 aa).

46–48 (GES) contacts L-glutamine. Cysteine 78 acts as the Nucleophile in catalysis. Residues arginine 108 and 137–138 (IR) contribute to the L-glutamine site. Residues histidine 174 and glutamate 176 each act as charge relay system in the active site.

It belongs to the glutaminase PdxT/SNO family. In the presence of PdxS, forms a dodecamer of heterodimers. Only shows activity in the heterodimer.

The enzyme catalyses aldehydo-D-ribose 5-phosphate + D-glyceraldehyde 3-phosphate + L-glutamine = pyridoxal 5'-phosphate + L-glutamate + phosphate + 3 H2O + H(+). It catalyses the reaction L-glutamine + H2O = L-glutamate + NH4(+). The protein operates within cofactor biosynthesis; pyridoxal 5'-phosphate biosynthesis. Functionally, catalyzes the hydrolysis of glutamine to glutamate and ammonia as part of the biosynthesis of pyridoxal 5'-phosphate. The resulting ammonia molecule is channeled to the active site of PdxS. This is Pyridoxal 5'-phosphate synthase subunit PdxT from Chloroflexus aurantiacus (strain ATCC 29366 / DSM 635 / J-10-fl).